Reading from the N-terminus, the 88-residue chain is Small ribosomal subunit protein bS20 (88 aa).

Residues 1-27 (MANSKSAKKRALQSEKRRQHNASRRSM) form a disordered region.

It belongs to the bacterial ribosomal protein bS20 family.

Its function is as follows. Binds directly to 16S ribosomal RNA. The polypeptide is Small ribosomal subunit protein bS20 (Shewanella frigidimarina (strain NCIMB 400)).